The following is a 1427-amino-acid chain: DNA-directed RNA polymerase subunit beta' (1427 aa).

Residues C70, C72, C85, and C88 each contribute to the Zn(2+) site. 3 residues coordinate Mg(2+): D461, D463, and D465. Zn(2+) contacts are provided by C838, C912, C919, and C922.

The protein belongs to the RNA polymerase beta' chain family. In terms of assembly, the RNAP catalytic core consists of 2 alpha, 1 beta, 1 beta' and 1 omega subunit. When a sigma factor is associated with the core the holoenzyme is formed, which can initiate transcription. Requires Mg(2+) as cofactor. The cofactor is Zn(2+).

It carries out the reaction RNA(n) + a ribonucleoside 5'-triphosphate = RNA(n+1) + diphosphate. Its function is as follows. DNA-dependent RNA polymerase catalyzes the transcription of DNA into RNA using the four ribonucleoside triphosphates as substrates. This Sorangium cellulosum (strain So ce56) (Polyangium cellulosum (strain So ce56)) protein is DNA-directed RNA polymerase subunit beta'.